A 546-amino-acid chain; its full sequence is Phosphomethylpyrimidine synthase (546 aa).

Substrate-binding positions include asparagine 145, methionine 174, tyrosine 203, histidine 239, 259–261, 300–303, and glutamate 339; these read SRG and DGLR. Zn(2+) is bound at residue histidine 343. Tyrosine 366 contributes to the substrate binding site. Histidine 407 is a Zn(2+) binding site. [4Fe-4S] cluster is bound by residues cysteine 487, cysteine 490, and cysteine 495.

Belongs to the ThiC family. Requires [4Fe-4S] cluster as cofactor.

The catalysed reaction is 5-amino-1-(5-phospho-beta-D-ribosyl)imidazole + S-adenosyl-L-methionine = 4-amino-2-methyl-5-(phosphooxymethyl)pyrimidine + CO + 5'-deoxyadenosine + formate + L-methionine + 3 H(+). The protein operates within cofactor biosynthesis; thiamine diphosphate biosynthesis. In terms of biological role, catalyzes the synthesis of the hydroxymethylpyrimidine phosphate (HMP-P) moiety of thiamine from aminoimidazole ribotide (AIR) in a radical S-adenosyl-L-methionine (SAM)-dependent reaction. The sequence is that of Phosphomethylpyrimidine synthase from Mycobacterium ulcerans (strain Agy99).